A 409-amino-acid chain; its full sequence is Pectin acetylesterase 4 (409 aa).

The N-terminal stretch at 1-32 (MVIRSLLQCRTWSKSDWLLASIGIVLIVYSFS) is a signal peptide. N36 and N163 each carry an N-linked (GlcNAc...) asparagine glycan. Active-site charge relay system residues include S199, D295, and H362. N-linked (GlcNAc...) asparagine glycosylation is found at N379 and N406.

Belongs to the pectinacetylesterase family.

The protein resides in the secreted. Its subcellular location is the cell wall. In terms of biological role, hydrolyzes acetyl esters in homogalacturonan regions of pectin. In type I primary cell wall, galacturonic acid residues of pectin can be acetylated at the O-2 and O-3 positions. Decreasing the degree of acetylation of pectin gels in vitro alters their physical properties. This chain is Pectin acetylesterase 4, found in Arabidopsis thaliana (Mouse-ear cress).